A 349-amino-acid polypeptide reads, in one-letter code: Isopentenyl-diphosphate delta-isomerase (349 aa).

6–7 (RK) is a substrate binding site. Residues 62-64 (AMT), Ser93, and Asn122 each bind FMN. Gln152 serves as a coordination point for substrate. Residue Glu153 participates in Mg(2+) binding. FMN contacts are provided by residues Lys184, Thr214, 258–259 (GG), and 280–281 (AG).

Belongs to the IPP isomerase type 2 family. Homooctamer. Dimer of tetramers. Requires FMN as cofactor. It depends on NADPH as a cofactor. Mg(2+) serves as cofactor.

It localises to the cytoplasm. It carries out the reaction isopentenyl diphosphate = dimethylallyl diphosphate. Functionally, involved in the biosynthesis of isoprenoids. Catalyzes the 1,3-allylic rearrangement of the homoallylic substrate isopentenyl (IPP) to its allylic isomer, dimethylallyl diphosphate (DMAPP). The protein is Isopentenyl-diphosphate delta-isomerase of Bacillus cereus (strain B4264).